The primary structure comprises 201 residues: Outer-membrane lipoprotein carrier protein (201 aa).

Residues 1-21 (MKKVLLTVCAIALFGSQAAWA) form the signal peptide.

It belongs to the LolA family. As to quaternary structure, monomer.

It is found in the periplasm. Functionally, participates in the translocation of lipoproteins from the inner membrane to the outer membrane. Only forms a complex with a lipoprotein if the residue after the N-terminal Cys is not an aspartate (The Asp acts as a targeting signal to indicate that the lipoprotein should stay in the inner membrane). This is Outer-membrane lipoprotein carrier protein from Proteus mirabilis (strain HI4320).